Consider the following 352-residue polypeptide: UDP-3-O-acylglucosamine N-acyltransferase (352 aa).

The active-site Proton acceptor is His-242.

This sequence belongs to the transferase hexapeptide repeat family. LpxD subfamily. Homotrimer.

The catalysed reaction is a UDP-3-O-[(3R)-3-hydroxyacyl]-alpha-D-glucosamine + a (3R)-hydroxyacyl-[ACP] = a UDP-2-N,3-O-bis[(3R)-3-hydroxyacyl]-alpha-D-glucosamine + holo-[ACP] + H(+). Its pathway is bacterial outer membrane biogenesis; LPS lipid A biosynthesis. In terms of biological role, catalyzes the N-acylation of UDP-3-O-acylglucosamine using 3-hydroxyacyl-ACP as the acyl donor. Is involved in the biosynthesis of lipid A, a phosphorylated glycolipid that anchors the lipopolysaccharide to the outer membrane of the cell. In Alkalilimnicola ehrlichii (strain ATCC BAA-1101 / DSM 17681 / MLHE-1), this protein is UDP-3-O-acylglucosamine N-acyltransferase.